A 156-amino-acid polypeptide reads, in one-letter code: Transcription antitermination protein NusB (156 aa).

This sequence belongs to the NusB family.

In terms of biological role, involved in transcription antitermination. Required for transcription of ribosomal RNA (rRNA) genes. Binds specifically to the boxA antiterminator sequence of the ribosomal RNA (rrn) operons. The protein is Transcription antitermination protein NusB of Mycobacterium tuberculosis (strain CDC 1551 / Oshkosh).